The sequence spans 670 residues: Pescadillo homolog (670 aa).

Residues Gly292–Phe321 are a coiled coil. A BRCT domain is found at Lys316–Ile402. The disordered stretch occupies residues Arg643–Gln670. Basic and acidic residues predominate over residues Gln644–Tyr662.

It belongs to the pescadillo family.

It is found in the nucleus. Its subcellular location is the nucleolus. It localises to the nucleoplasm. Required for maturation of ribosomal RNAs and formation of the large ribosomal subunit. The polypeptide is Pescadillo homolog (Leishmania braziliensis).